We begin with the raw amino-acid sequence, 238 residues long: Probable transcriptional regulatory protein SAK_1658 (238 aa).

It belongs to the TACO1 family. YeeN subfamily.

It is found in the cytoplasm. This Streptococcus agalactiae serotype Ia (strain ATCC 27591 / A909 / CDC SS700) protein is Probable transcriptional regulatory protein SAK_1658.